A 372-amino-acid chain; its full sequence is GDP-mannose 4,6 dehydratase (372 aa).

The tract at residues 1–22 (MAHAPASCPSSRNSGDGDKGKP) is disordered. Ala-2 bears the N-acetylalanine mark. Residues 30-35 (GITGQD), 55-58 (RRSS), 86-87 (DL), 108-112 (LGAQS), and Tyr-123 each bind NADP(+). The active site involves Thr-155. Residues Glu-157 and Tyr-179 each act as nucleophile in the active site. NADP(+) contacts are provided by Lys-183, His-209, and Arg-214. Tyr-323 carries the phosphotyrosine modification.

Belongs to the NAD(P)-dependent epimerase/dehydratase family. GDP-mannose 4,6-dehydratase subfamily. The cofactor is NADP(+).

It carries out the reaction GDP-alpha-D-mannose = GDP-4-dehydro-alpha-D-rhamnose + H2O. The protein operates within nucleotide-sugar biosynthesis; GDP-L-fucose biosynthesis via de novo pathway; GDP-L-fucose from GDP-alpha-D-mannose: step 1/2. Inhibited by GDP-fucose. Its function is as follows. Catalyzes the conversion of GDP-D-mannose to GDP-4-dehydro-6-deoxy-D-mannose. The protein is GDP-mannose 4,6 dehydratase (GMDS) of Cricetulus griseus (Chinese hamster).